The following is a 592-amino-acid chain: Aspartate--tRNA(Asp/Asn) ligase (592 aa).

An L-aspartate-binding site is contributed by E182. Positions 206-209 (QIFK) are aspartate. R228 contributes to the L-aspartate binding site. ATP is bound by residues 228–230 (RDE) and Q237. Residue H455 participates in L-aspartate binding. Residue E489 participates in ATP binding. R496 lines the L-aspartate pocket. 541 to 544 (GLDR) serves as a coordination point for ATP.

This sequence belongs to the class-II aminoacyl-tRNA synthetase family. Type 1 subfamily. In terms of assembly, homodimer.

The protein localises to the cytoplasm. It carries out the reaction tRNA(Asx) + L-aspartate + ATP = L-aspartyl-tRNA(Asx) + AMP + diphosphate. Its function is as follows. Aspartyl-tRNA synthetase with relaxed tRNA specificity since it is able to aspartylate not only its cognate tRNA(Asp) but also tRNA(Asn). Reaction proceeds in two steps: L-aspartate is first activated by ATP to form Asp-AMP and then transferred to the acceptor end of tRNA(Asp/Asn). The sequence is that of Aspartate--tRNA(Asp/Asn) ligase from Thermoanaerobacter sp. (strain X514).